The sequence spans 125 residues: uncharacterized protein (125 aa).

This is an uncharacterized protein from Acanthamoeba polyphaga (Amoeba).